Reading from the N-terminus, the 429-residue chain is Fumarylacetoacetase (429 aa).

Aspartate 139 is a Ca(2+) binding site. Histidine 146 serves as the catalytic Proton acceptor. Arginine 155 contacts substrate. Ca(2+) is bound by residues glutamate 212, glutamate 214, and aspartate 246. Position 246 (aspartate 246) interacts with Mg(2+). A substrate-binding site is contributed by glutamine 253. Residues lysine 266 and threonine 270 each coordinate Mg(2+). A substrate-binding site is contributed by threonine 363.

The protein belongs to the FAH family. Requires Ca(2+) as cofactor. The cofactor is Mg(2+).

It catalyses the reaction 4-fumarylacetoacetate + H2O = acetoacetate + fumarate + H(+). It participates in amino-acid degradation; L-phenylalanine degradation; acetoacetate and fumarate from L-phenylalanine: step 6/6. In terms of biological role, converts fumarylacetoacetate to acetoacetate and fumarate. Involved in tyrosine catabolic pathway. Catalyzes the final step in the tyrosine degradation pathway. This is Fumarylacetoacetase from Oryza sativa subsp. japonica (Rice).